Here is a 651-residue protein sequence, read N- to C-terminus: Threonine--tRNA ligase (651 aa).

The 61-residue stretch at Met1 to Lys61 folds into the TGS domain. A catalytic region spans residues Asp242–Pro541. The Zn(2+) site is built by Cys337, His388, and His518.

This sequence belongs to the class-II aminoacyl-tRNA synthetase family. As to quaternary structure, homodimer. Zn(2+) serves as cofactor.

The protein resides in the cytoplasm. The enzyme catalyses tRNA(Thr) + L-threonine + ATP = L-threonyl-tRNA(Thr) + AMP + diphosphate + H(+). In terms of biological role, catalyzes the attachment of threonine to tRNA(Thr) in a two-step reaction: L-threonine is first activated by ATP to form Thr-AMP and then transferred to the acceptor end of tRNA(Thr). Also edits incorrectly charged L-seryl-tRNA(Thr). This Parabacteroides distasonis (strain ATCC 8503 / DSM 20701 / CIP 104284 / JCM 5825 / NCTC 11152) protein is Threonine--tRNA ligase.